The sequence spans 362 residues: Heat-inducible transcription repressor HrcA (362 aa).

The protein belongs to the HrcA family.

Its function is as follows. Negative regulator of class I heat shock genes (grpE-dnaK-dnaJ and groELS operons). Prevents heat-shock induction of these operons. This chain is Heat-inducible transcription repressor HrcA, found in Rhodopseudomonas palustris (strain BisB18).